Consider the following 78-residue polypeptide: DNA-directed RNA polymerase subunit Rpo5 (78 aa).

It belongs to the archaeal Rpo5/eukaryotic RPB5 RNA polymerase subunit family. As to quaternary structure, part of the RNA polymerase complex.

The protein localises to the cytoplasm. It carries out the reaction RNA(n) + a ribonucleoside 5'-triphosphate = RNA(n+1) + diphosphate. Its function is as follows. DNA-dependent RNA polymerase (RNAP) catalyzes the transcription of DNA into RNA using the four ribonucleoside triphosphates as substrates. The polypeptide is DNA-directed RNA polymerase subunit Rpo5 (Methanosarcina barkeri (strain Fusaro / DSM 804)).